A 718-amino-acid chain; its full sequence is Ribonuclease J (718 aa).

The interval 1–130 (MNDSRNRGRK…RGNRGGGRRN (130 aa)) is disordered. 2 stretches are compositionally biased toward low complexity: residues 55–91 (AAQG…NNNR) and 100–118 (SGNA…NRQG). Zn(2+) is bound by residues histidine 220, histidine 222, aspartate 224, histidine 225, histidine 287, and aspartate 309. Position 510–514 (510–514 (HTSGH)) interacts with substrate. Histidine 536 contacts Zn(2+).

It belongs to the metallo-beta-lactamase superfamily. RNA-metabolizing metallo-beta-lactamase-like family. Bacterial RNase J subfamily. Homodimer, may be a subunit of the RNA degradosome. Zn(2+) is required as a cofactor.

It localises to the cytoplasm. In terms of biological role, an RNase that has 5'-3' exonuclease and possibly endoonuclease activity. Involved in maturation of rRNA and in some organisms also mRNA maturation and/or decay. This Corynebacterium glutamicum (strain ATCC 13032 / DSM 20300 / JCM 1318 / BCRC 11384 / CCUG 27702 / LMG 3730 / NBRC 12168 / NCIMB 10025 / NRRL B-2784 / 534) protein is Ribonuclease J.